A 606-amino-acid polypeptide reads, in one-letter code: NADH-ubiquinone oxidoreductase chain 5 (606 aa).

A run of 16 helical transmembrane segments spans residues M1 to M21, A43 to I63, I88 to M108, F117 to L137, L140 to G160, A171 to T191, L209 to L229, T241 to I261, M273 to L293, L310 to C330, M366 to L386, L413 to G433, L457 to I477, L488 to A508, F513 to M533, and G582 to L602.

It belongs to the complex I subunit 5 family. As to quaternary structure, core subunit of respiratory chain NADH dehydrogenase (Complex I) which is composed of 45 different subunits.

It is found in the mitochondrion inner membrane. The enzyme catalyses a ubiquinone + NADH + 5 H(+)(in) = a ubiquinol + NAD(+) + 4 H(+)(out). In terms of biological role, core subunit of the mitochondrial membrane respiratory chain NADH dehydrogenase (Complex I) which catalyzes electron transfer from NADH through the respiratory chain, using ubiquinone as an electron acceptor. Essential for the catalytic activity and assembly of complex I. In Felis catus (Cat), this protein is NADH-ubiquinone oxidoreductase chain 5 (MT-ND5).